We begin with the raw amino-acid sequence, 1850 residues long: Voltage-dependent L-type calcium channel subunit alpha-1S (1850 aa).

A disordered region spans residues methionine 1–isoleucine 23. The Cytoplasmic portion of the chain corresponds to methionine 1 to lysine 51. The stretch at asparagine 38–phenylalanine 337 is one I repeat. A helical membrane pass occupies residues proline 52 to valine 70. At tyrosine 71–glycine 85 the chain is on the extracellular side. Residues leucine 86–isoleucine 106 traverse the membrane as a helical segment. Topologically, residues alanine 107–aspartate 115 are cytoplasmic. A helical membrane pass occupies residues alanine 116 to threonine 136. Residues alanine 137–aspartate 160 are Extracellular-facing. A helical membrane pass occupies residues valine 161–valine 179. At proline 180–leucine 196 the chain is on the cytoplasmic side. A helical transmembrane segment spans residues phenylalanine 197–phenylalanine 218. Residues lysine 219–glycine 279 are Extracellular-facing. Cystine bridges form between cysteine 226–cysteine 254 and cysteine 245–cysteine 261. An intramembrane region (pore-forming) is located at residues phenylalanine 280–valine 301. The Selectivity filter of repeat I motif lies at serine 290–glycine 293. Glutamate 292 is a binding site for Ca(2+). At asparagine 302–tryptophan 309 the chain is on the extracellular side. The chain crosses the membrane as a helical span at residues proline 310 to leucine 330. Residues glycine 331–lysine 432 are Cytoplasmic-facing. The tract at residues glutamine 357–glutamate 374 is binding to the beta subunit. Residues serine 393 and serine 397 each carry the phosphoserine modification. The II repeat unit spans residues asparagine 418 to leucine 664. Residues valine 433–serine 451 traverse the membrane as a helical segment. The Extracellular segment spans residues glutamate 452–histidine 462. The chain crosses the membrane as a helical span at residues leucine 463–methionine 483. The Cytoplasmic segment spans residues tyrosine 484–serine 494. Residues isoleucine 495 to valine 514 traverse the membrane as a helical segment. The Extracellular portion of the chain corresponds to glutamate 515–glycine 523. A helical transmembrane segment spans residues isoleucine 524–tryptophan 542. Over threonine 543–serine 561 the chain is Cytoplasmic. The chain crosses the membrane as a helical span at residues leucine 562–phenylalanine 581. The Extracellular portion of the chain corresponds to glycine 582–proline 601. Positions glutamine 602–glycine 623 form an intramembrane region, pore-forming. The Selectivity filter of repeat II motif lies at threonine 612–aspartate 615. Glutamate 614 lines the Ca(2+) pocket. The Extracellular portion of the chain corresponds to isoleucine 624–proline 633. The helical transmembrane segment at glycine 634–leucine 653 threads the bilayer. Topologically, residues asparagine 654–threonine 799 are cytoplasmic. 2 disordered regions span residues alanine 673–threonine 717 and glutamate 731–proline 758. At serine 687 the chain carries Phosphoserine; by PKA. Basic and acidic residues predominate over residues leucine 690–glycine 711. Acidic residues predominate over residues proline 742–glutamate 751. Residues asparagine 786–phenylalanine 1068 form an III repeat. A helical transmembrane segment spans residues tryptophan 800–alanine 818. Residues glutamate 819–glutamine 830 are Extracellular-facing. Residues isoleucine 831–lysine 850 traverse the membrane as a helical segment. Residues methionine 851 to asparagine 866 lie on the Cytoplasmic side of the membrane. A helical transmembrane segment spans residues tyrosine 867–leucine 885. Topologically, residues glutamate 886 to valine 892 are extracellular. Residues valine 893–alanine 911 traverse the membrane as a helical segment. At lysine 912–asparagine 930 the chain is on the cytoplasmic side. Residues isoleucine 931–phenylalanine 950 form a helical membrane-spanning segment. The Extracellular segment spans residues lysine 951–valine 1000. Cysteine 957 and cysteine 968 form a disulfide bridge. A dihydropyridine binding region spans residues arginine 988–lysine 1077. An intramembrane region (pore-forming) is located at residues leucine 1001–tyrosine 1021. The short motif at threonine 1012–glycine 1015 is the Selectivity filter of repeat III element. Residue glutamate 1014 participates in Ca(2+) binding. At lysine 1022–arginine 1038 the chain is on the extracellular side. A helical transmembrane segment spans residues valine 1039–phenylalanine 1060. The Cytoplasmic segment spans residues valine 1061 to serine 1118. Residues asparagine 1105 to phenylalanine 1384 form an IV repeat. Residues tyrosine 1119–tyrosine 1140 form a helical membrane-spanning segment. N-linked (GlcNAc...) asparagine glycosylation is present at asparagine 1141. Residues asparagine 1141–histidine 1148 are Extracellular-facing. The helical transmembrane segment at isoleucine 1149–isoleucine 1170 threads the bilayer. Over alanine 1171–aspartate 1180 the chain is Cytoplasmic. The helical transmembrane segment at proline 1181–serine 1200 threads the bilayer. Topologically, residues glutamate 1201–serine 1231 are extracellular. A helical membrane pass occupies residues serine 1232–alanine 1250. Topologically, residues glutamate 1251–proline 1268 are cytoplasmic. The helical transmembrane segment at tyrosine 1269 to phenylalanine 1289 threads the bilayer. Residues glycine 1290–glutamine 1311 lie on the Extracellular side of the membrane. An intramembrane region (pore-forming) is located at residues alanine 1312–leucine 1330. The Selectivity filter of repeat IV signature appears at threonine 1321 to alanine 1324. The Extracellular portion of the chain corresponds to alanine 1331 to phenylalanine 1356. The segment at arginine 1337–lysine 1403 is dihydropyridine binding. The cysteines at positions 1338 and 1352 are disulfide-linked. A phenylalkylamine binding region spans residues glutamate 1349–tryptophan 1391. The chain crosses the membrane as a helical span at residues alanine 1357 to methionine 1381. The Cytoplasmic segment spans residues aspartate 1382–proline 1850. The segment at lysine 1522 to glutamate 1542 is interaction with calmodulin. The residue at position 1575 (serine 1575) is a Phosphoserine; by PKA and CAMK2. Threonine 1579 is modified (phosphothreonine). Phosphoserine; by PKA is present on serine 1617. Positions proline 1697–alanine 1779 are disordered. Polar residues predominate over residues glutamine 1706–arginine 1716. 2 stretches are compositionally biased toward basic and acidic residues: residues serine 1717 to methionine 1726 and glutamine 1745 to glycine 1756.

This sequence belongs to the calcium channel alpha-1 subunit (TC 1.A.1.11) family. CACNA1S subfamily. As to quaternary structure, component of a calcium channel complex consisting of a pore-forming alpha subunit (CACNA1S) and the ancillary subunits CACNB1 or CACNB2, CACNG1 and CACNA2D1. The channel complex contains alpha, beta, gamma and delta subunits in a 1:1:1:1 ratio, i.e. it contains either CACNB1 or CACNB2. CACNA1S channel activity is modulated by the auxiliary subunits (CACNB1 or CACNB2, CACNG1 and CACNA2D1). Interacts with DYSF and JSRP1. Interacts with RYR1. Interacts with STAC, STAC2 and STAC3 (via their SH3 domains). Interacts with CALM. In terms of processing, the alpha-1S subunit is found in two isoforms in the skeletal muscle: a minor form of 212 kDa containing the complete amino acid sequence, and a major form of 190 kDa derived from the full-length form by post-translational proteolysis close to Phe-1690. Post-translationally, phosphorylated. Phosphorylation by PKA activates the calcium channel. Both the minor and major forms are phosphorylated in vitro by PKA. Phosphorylation at Ser-1575 is involved in beta-adrenergic-mediated regulation of the channel. Skeletal muscle specific.

The protein localises to the cell membrane. The protein resides in the sarcolemma. It localises to the T-tubule. It catalyses the reaction Ca(2+)(in) = Ca(2+)(out). Its activity is regulated as follows. Channel activity is blocked by dihydropyridines (DHP), phenylalkylamines, and by benzothiazepines. Its function is as follows. Pore-forming, alpha-1S subunit of the voltage-gated calcium channel that gives rise to L-type calcium currents in skeletal muscle. Calcium channels containing the alpha-1S subunit play an important role in excitation-contraction coupling in skeletal muscle via their interaction with RYR1, which triggers Ca(2+) release from the sarcplasmic reticulum and ultimately results in muscle contraction. Long-lasting (L-type) calcium channels belong to the 'high-voltage activated' (HVA) group. The polypeptide is Voltage-dependent L-type calcium channel subunit alpha-1S (Cacna1s) (Rattus norvegicus (Rat)).